Here is a 197-residue protein sequence, read N- to C-terminus: Double homeobox protein 5 (197 aa).

DNA-binding regions (homeobox) lie at residues 46-105 (GRRM…LRQH) and 121-180 (GRRK…RGQS). The interval 101-127 (QLRQHRRQSRPWPGRRDPQKGRRKRTA) is disordered.

The protein belongs to the paired homeobox family. Expressed in hepatoma Hep3B cells.

Its subcellular location is the nucleus. This is Double homeobox protein 5 (DUX5) from Homo sapiens (Human).